The chain runs to 147 residues: 3-dehydroquinate dehydratase (147 aa).

Tyrosine 23 (proton acceptor) is an active-site residue. Substrate is bound by residues asparagine 75, histidine 81, and aspartate 88. Catalysis depends on histidine 101, which acts as the Proton donor. Substrate contacts are provided by residues 102–103 (LS) and arginine 112.

Belongs to the type-II 3-dehydroquinase family. Homododecamer.

It catalyses the reaction 3-dehydroquinate = 3-dehydroshikimate + H2O. The protein operates within metabolic intermediate biosynthesis; chorismate biosynthesis; chorismate from D-erythrose 4-phosphate and phosphoenolpyruvate: step 3/7. Its function is as follows. Catalyzes a trans-dehydration via an enolate intermediate. In Nitrosococcus oceani (strain ATCC 19707 / BCRC 17464 / JCM 30415 / NCIMB 11848 / C-107), this protein is 3-dehydroquinate dehydratase.